We begin with the raw amino-acid sequence, 178 residues long: Inner membrane-spanning protein YciB (178 aa).

The next 5 membrane-spanning stretches (helical) occupy residues 22–42, 50–70, 72–92, 121–141, and 149–169; these read IFYASGALIAATGLAVAMTYF, ASLITFIMVAVFGTLTLAFHS, LFIKWKVTVIYALFALALLGS, MAWALFFTACALANIYVAFWL, and FKVFGLTALTLVFTVLSVVYI.

It belongs to the YciB family.

It is found in the cell inner membrane. Plays a role in cell envelope biogenesis, maintenance of cell envelope integrity and membrane homeostasis. The chain is Inner membrane-spanning protein YciB from Photorhabdus laumondii subsp. laumondii (strain DSM 15139 / CIP 105565 / TT01) (Photorhabdus luminescens subsp. laumondii).